Reading from the N-terminus, the 437-residue chain is MKVIFLRQLKTRGMERKCSRRPGLGPPTLYTFLLGIIFITLSSSRILLVKYSANEENKYDYLPTTVNVCSELMKLILCILVSLCVIKKEDHQSRHLRCTSWKEFSSFMKWSIPAFLYFLDNLIVFYVLSYLQPAMAVIFSNFSIITTALLFRIVLKRHLNWIQWASLLILFLSIVALTASTKTSQHELAGHGFHHDAFFTPSNSCLHFRRDCSLRDNCTSKEWTFSEVQWNTTARVFSHIRLGLGHVLIIVQCFISSMANIYNEKILKEGTQLTESIFIQNSKLYFFGIVFNGLTLVLQSSNRDQIQNCGFFYGHNAFSVVLIFVTAFQGLSVAFILKFLDNMFHVLMAQVTTVIITTVSVLVFDFRPSLDFFLEAPSVLLSIFIYNASKPQNLECAPKQERIRHLSGSLWERSSGDGEELERLTKLKSDDSDDDTL.

Topologically, residues 1-21 are cytoplasmic; that stretch reads MKVIFLRQLKTRGMERKCSRR. The helical transmembrane segment at 22-42 threads the bilayer; sequence PGLGPPTLYTFLLGIIFITLS. At 43–65 the chain is on the lumenal side; the sequence is SSRILLVKYSANEENKYDYLPTT. The helical transmembrane segment at 66–86 threads the bilayer; sequence VNVCSELMKLILCILVSLCVI. The Cytoplasmic portion of the chain corresponds to 87 to 106; the sequence is KKEDHQSRHLRCTSWKEFSS. A helical membrane pass occupies residues 107–129; sequence FMKWSIPAFLYFLDNLIVFYVLS. Residues 130-132 are Lumenal-facing; it reads YLQ. A helical membrane pass occupies residues 133–155; it reads PAMAVIFSNFSIITTALLFRIVL. Over 156-158 the chain is Cytoplasmic; the sequence is KRH. A helical transmembrane segment spans residues 159–179; that stretch reads LNWIQWASLLILFLSIVALTA. Residues 180–241 lie on the Lumenal side of the membrane; the sequence is STKTSQHELA…TTARVFSHIR (62 aa). Residue Asn-217 is glycosylated (N-linked (GlcNAc...) asparagine). A helical membrane pass occupies residues 242 to 262; the sequence is LGLGHVLIIVQCFISSMANIY. The Cytoplasmic segment spans residues 263–276; it reads NEKILKEGTQLTES. Residues 277 to 297 traverse the membrane as a helical segment; it reads IFIQNSKLYFFGIVFNGLTLV. Topologically, residues 298 to 316 are lumenal; it reads LQSSNRDQIQNCGFFYGHN. Residues 317–337 traverse the membrane as a helical segment; that stretch reads AFSVVLIFVTAFQGLSVAFIL. Residues 338–343 are Cytoplasmic-facing; that stretch reads KFLDNM. A helical transmembrane segment spans residues 344–364; the sequence is FHVLMAQVTTVIITTVSVLVF. The Lumenal portion of the chain corresponds to 365-367; sequence DFR. The helical transmembrane segment at 368–388 threads the bilayer; the sequence is PSLDFFLEAPSVLLSIFIYNA. The Cytoplasmic portion of the chain corresponds to 389 to 437; sequence SKPQNLECAPKQERIRHLSGSLWERSSGDGEELERLTKLKSDDSDDDTL. 3 positions are modified to phosphoserine: Ser-407, Ser-429, and Ser-432. A disordered region spans residues 412 to 437; it reads ERSSGDGEELERLTKLKSDDSDDDTL. Over residues 421-430 the composition is skewed to basic and acidic residues; the sequence is LERLTKLKSD.

The protein belongs to the nucleotide-sugar transporter family. SLC35A subfamily. As to quaternary structure, probably forms homooligomers and heterooligomers with SLC35A1, SLC35A2, SLC35A3 and SLC35A4.

Its subcellular location is the golgi apparatus membrane. The enzyme catalyses UMP(out) + UDP-alpha-D-glucuronate(in) = UMP(in) + UDP-alpha-D-glucuronate(out). It carries out the reaction UMP(out) + UDP-N-acetyl-alpha-D-glucosamine(in) = UMP(in) + UDP-N-acetyl-alpha-D-glucosamine(out). It catalyses the reaction UDP-N-acetyl-alpha-D-galactosamine(in) + UMP(out) = UDP-N-acetyl-alpha-D-galactosamine(out) + UMP(in). Probable UDP-sugar:UMP transmembrane antiporter involved in UDP-alpha-D-glucuronate/UDP-GlcA, UDP-GlcNAc/UDP-N-acetyl-alpha-D-glucosamine and UDP-N-acetyl-alpha-D-galactosamine/UDP-GalNAc transport from the cytosol to the lumen of the Golgi. This chain is UDP-sugar transporter protein SLC35A5, found in Mus musculus (Mouse).